A 76-amino-acid polypeptide reads, in one-letter code: VVPYGLGSPRSKRALENLLPTKATDRENRCQCASQKDKKCWNFCQAGKELRAKDLMEKGWNNHKKGKDCSKLGKKC.

The interval 30–44 (CQCASQKDKKCWNFC) is endothelin-like.

Belongs to the endothelin/sarafotoxin family.

It localises to the secreted. Its function is as follows. Endothelins are endothelium-derived vasoconstrictor peptides. Probable ligand for G-protein coupled receptors EDNRA and EDNRB which activates PTK2B, BCAR1, BCAR3 and, GTPases RAP1 and RHOA cascade in glomerular mesangial cells. Also binds the DEAR/FBXW7-AS1 receptor. Promotes mesenteric arterial wall remodeling via activation of ROCK signaling and subsequent colocalization of NFATC3 with F-actin filaments. NFATC3 then translocates to the nucleus where it subsequently promotes the transcription of the smooth muscle hypertrophy and differentiation marker ACTA2. This Macaca fascicularis (Crab-eating macaque) protein is Endothelin-1 (EDN1).